The sequence spans 411 residues: MKILYLDCFSGISGDMMVGALVDAGVPSEKIEVELKKLSLSGYKLQWGKVVKKGISATKFDVIIQESIEGGHHHQSHHAHRHYSDIIDMIRRSELSEEVKQRAGQIFHCIAVAEAKIHGIPVENVHFHEVGAVDSIVDIVATAIALTELHIDYIISAPIPLGHGSIRCAHGVYPVPAPATLEILQGVPVVSNHLPFELTTPTGAGIVKSQVNSYGPLPSMKISAIGYGAGTRDLPDQPNVLRVVIGEETRITSSGPSLFHSKEETVYILECQLDDMPGEALGYVMDGLFQKGALDVFYTPVFMKKNRPGVLLTVLTSATHVEQCEQFMLKETTTLGIRKDIWVREVLERDVVTVATSYGNIRVKQAIHKGKVIRQMPEYEDVKEAALTHQVAFLDVYAEAAEQARRRIKGE.

Belongs to the LarC family.

It catalyses the reaction Ni(II)-pyridinium-3,5-bisthiocarboxylate mononucleotide = pyridinium-3,5-bisthiocarboxylate mononucleotide + Ni(2+). Involved in the biosynthesis of a nickel-pincer cofactor ((SCS)Ni(II) pincer complex). Binds Ni(2+), and functions in nickel delivery to pyridinium-3,5-bisthiocarboxylic acid mononucleotide (P2TMN), to form the mature cofactor. Is thus probably required for the activation of nickel-pincer cofactor-dependent enzymes. In Geobacillus kaustophilus (strain HTA426), this protein is Pyridinium-3,5-bisthiocarboxylic acid mononucleotide nickel insertion protein.